A 417-amino-acid polypeptide reads, in one-letter code: Methyltransferase/ribosomally synthesized cyclic peptide omphalotin A precursor ophMA (417 aa).

Positions 1–251 (METSTQTKAG…GVSTFYIPPK (251 aa)) are methyltransferase domain. Active-site residues include Arg-72, Tyr-76, and Tyr-98. S-adenosyl-L-methionine contacts are provided by Tyr-98, His-100, Val-103, Ala-130, Gln-172, Ala-213, Ser-244, and Thr-245. The interval 252 to 378 (ARKASNLDII…WAIRCAMKNM (127 aa)) is clasp domain. A precursor leader region spans residues 379–399 (PSSLLDAARESGEEASQNGFP). N-methylvaline is present on residues Val-401, Val-403, and Val-404. Gly-405 carries the N-methylglycine modification. Position 406 is an N-methylvaline (Val-406). Residue Ile-407 is modified to N-methylisoleucine. Position 408 is an N-methylglycine (Gly-408). Ile-410 carries the post-translational modification N-methylisoleucine. Gly-411 is subject to N-methylglycine. Position 413 is an N-methylvaline (Val-413).

This sequence in the N-terminal section; belongs to the precorrin methyltransferase family. Homodimer. In terms of processing, ophMA automethylates at Val-401, Val-403, Val-404, Gly-405, Val-406, Ile-407, Gly-408, Ile-410, Gly-411 and Val-413 before being processed by the prolyloligopeptidase ophP which likely forms a peptidyl ester upon removal of the follower propeptide, which then undergoes macrocyclization with the N-terminus of the modified core peptide. Peptide backbone alpha-N-methylations change the physicochemical properties of amide bonds to provide structural constraints and other favorable characteristics including biological membrane permeability to peptides.

The protein operates within mycotoxin biosynthesis. In terms of biological role, fusion protein of the methyltransferase ophM and the omphalotin core peptide; part of the gene cluster that mediates the biosynthesis of omphalotin A, a highly methylated cyclic dodecapeptide with nematodicidal activity. Omphalotin A derives from the C-terminus of the ophMA protein, and it is the ophMA protein that methylates its own C-terminus using S-adenosyl methionine (SAM). The C-terminus is subsequently cleaved off and macrocyclized by the prolyloligopeptidase ophP to give the final product. This is Methyltransferase/ribosomally synthesized cyclic peptide omphalotin A precursor ophMA from Omphalotus olearius (Jack o'lantern).